Consider the following 125-residue polypeptide: Secreted RxLR effector protein 55 (125 aa).

The first 21 residues, 1 to 21 (MAASRSSITTLLLLIVAVALG), serve as a signal peptide directing secretion. The RxLR motif lies at 35–38 (RQLR). Residues 51 to 87 (ESATSSSSSSALDHKSSAPGEATNASETEHSAASTAS) show a composition bias toward low complexity. A disordered region spans residues 51–96 (ESATSSSSSSALDHKSSAPGEATNASETEHSAASTASEPKHEGPTM). Asn74 is a glycosylation site (N-linked (GlcNAc...) asparagine). Residues 99–119 (FVGPAAAGVLAILLIGAVIAF) form a helical membrane-spanning segment.

It belongs to the RxLR effector family.

The protein localises to the secreted. It is found in the host cell membrane. Its function is as follows. Effector that acts as a broad suppressor of cell death to interrupt plant immunity. Inhibits cell death induced by cell death-inducing proteins, including the PAMP elicitor INF1 from P.infestans. This Plasmopara viticola (Downy mildew of grapevine) protein is Secreted RxLR effector protein 55.